Reading from the N-terminus, the 219-residue chain is Probable cutinase 4 (219 aa).

A signal peptide spans 1–17 (MILPSLLVASLSALAAA). Intrachain disulfides connect Cys41/Cys120 and Cys67/Cys81. Asn99 is a glycosylation site (N-linked (GlcNAc...) asparagine). Residue Ser131 is the Nucleophile of the active site. Cys182 and Cys189 are joined by a disulfide. Residue Asp186 is part of the active site. His199 acts as the Proton donor/acceptor in catalysis.

Belongs to the cutinase family.

The protein resides in the secreted. The catalysed reaction is cutin + H2O = cutin monomers.. Catalyzes the hydrolysis of complex carboxylic polyesters found in the cell wall of plants. Degrades cutin, a macromolecule that forms the structure of the plant cuticle. The polypeptide is Probable cutinase 4 (Aspergillus terreus (strain NIH 2624 / FGSC A1156)).